Consider the following 29-residue polypeptide: Glucagon (29 aa).

Belongs to the glucagon family.

Its subcellular location is the secreted. In terms of biological role, glucagon plays a key role in glucose metabolism and homeostasis. Regulates blood glucose by increasing gluconeogenesis and decreasing glycolysis. The protein is Glucagon (GCG) of Meleagris gallopavo (Wild turkey).